We begin with the raw amino-acid sequence, 515 residues long: Glycosyltransferase family 92 protein F59C6.8 (515 aa).

A helical membrane pass occupies residues 18–38; the sequence is LFIFIAVCLGFLIAVTILAGL. The GT92 domain maps to 163–456; it reads RKVVACFSPL…IEVCYNRIFY (294 aa).

Belongs to the glycosyltransferase 92 family.

The protein resides in the membrane. This is Glycosyltransferase family 92 protein F59C6.8 from Caenorhabditis elegans.